The sequence spans 130 residues: Putative ankyrin repeat protein R886 (130 aa).

ANK repeat units lie at residues 21-50 (NYDR…DITA), 54-83 (YGFT…SIIK), and 85-113 (DNLT…DIRY).

The sequence is that of Putative ankyrin repeat protein R886 from Acanthamoeba polyphaga (Amoeba).